A 364-amino-acid polypeptide reads, in one-letter code: Chorismate synthase (364 aa).

Residues arginine 48 and arginine 54 each coordinate NADP(+). Residues 125–127 (RSS), 238–239 (NA), glycine 278, 293–297 (KPTSS), and arginine 319 each bind FMN.

Belongs to the chorismate synthase family. In terms of assembly, homotetramer. The cofactor is FMNH2.

The enzyme catalyses 5-O-(1-carboxyvinyl)-3-phosphoshikimate = chorismate + phosphate. It functions in the pathway metabolic intermediate biosynthesis; chorismate biosynthesis; chorismate from D-erythrose 4-phosphate and phosphoenolpyruvate: step 7/7. Functionally, catalyzes the anti-1,4-elimination of the C-3 phosphate and the C-6 proR hydrogen from 5-enolpyruvylshikimate-3-phosphate (EPSP) to yield chorismate, which is the branch point compound that serves as the starting substrate for the three terminal pathways of aromatic amino acid biosynthesis. This reaction introduces a second double bond into the aromatic ring system. This is Chorismate synthase from Shewanella frigidimarina (strain NCIMB 400).